Here is a 396-residue protein sequence, read N- to C-terminus: Probable isocitrate dehydrogenase [NAD] gamma 2, mitochondrial (396 aa).

A mitochondrion-targeting transit peptide spans 1-25 (MLAVTSCSMKTVLQYAVFLGHSREV). Thr-117 provides a ligand contact to citrate. The substrate site is built by Arg-133, Arg-164, and Asp-251. Asp-251 lines the Mn(2+) pocket. Asn-321 provides a ligand contact to ADP.

Belongs to the isocitrate and isopropylmalate dehydrogenases family. Heterooligomer of subunits alpha (IDH3A), beta (IDH3B), and gamma (IDH3G) in the apparent ratio of 2:1:1. The heterodimer containing one IDH3A and one IDH3B subunit and the heterodimer containing one IDH3A and one IDH3G subunit assemble into a heterotetramer (which contains two subunits of IDH3A, one of IDH3B and one of IDH3G) and further into the heterooctamer. The cofactor is Mg(2+). It depends on Mn(2+) as a cofactor.

It is found in the mitochondrion. Its activity is regulated as follows. The heterotetramer and the heterodimer composed of IDH3A and IDH3G subunits can be allosterically activated by citrate (CIT) or/and ADP, and the two activators can act independently or synergistically. The heterodimer composed of IDH3A and IDH3B subunits cannot be allosterically regulated and the allosteric regulation of the heterotetramer is through the IDH3G subunit and not the IDH3B subunit. The IDH3G subunit contains the allosteric site which consists of a CIT-binding site and an ADP-binding site, and the binding of CIT and ADP causes conformational changes at the allosteric site which are transmitted to the active site in the catalytic subunit (IDH3A) through a cascade of conformational changes at the heterodimer interface, leading to stabilization of the isocitrate-binding at the active site and thus activation of the enzyme. ATP can activate the heterotetramer and the heterodimer composed of IDH3A and IDH3G subunits at low concentrations but inhibits their activities at high concentrations, whereas ATP exhibits only inhibitory effect on the heterodimer composed of IDH3A and IDH3B subunits. Its function is as follows. Regulatory subunit which plays a role in the allosteric regulation of the enzyme catalyzing the decarboxylation of isocitrate (ICT) into alpha-ketoglutarate. The heterodimer composed of the alpha (IDH3A) and beta (IDH3B) subunits and the heterodimer composed of the alpha (IDH3A) and gamma (IDH3G) subunits, have considerable basal activity but the full activity of the heterotetramer (containing two subunits of IDH3A, one of IDH3B and one of IDH3G) requires the assembly and cooperative function of both heterodimers. The protein is Probable isocitrate dehydrogenase [NAD] gamma 2, mitochondrial of Mus musculus (Mouse).